A 159-amino-acid chain; its full sequence is Protein-export protein SecB (159 aa).

Belongs to the SecB family. In terms of assembly, homotetramer, a dimer of dimers. One homotetramer interacts with 1 SecA dimer.

The protein localises to the cytoplasm. Its function is as follows. One of the proteins required for the normal export of preproteins out of the cell cytoplasm. It is a molecular chaperone that binds to a subset of precursor proteins, maintaining them in a translocation-competent state. It also specifically binds to its receptor SecA. The polypeptide is Protein-export protein SecB (Shewanella amazonensis (strain ATCC BAA-1098 / SB2B)).